The following is a 425-amino-acid chain: Dihydroorotase (425 aa).

2 residues coordinate Zn(2+): His-56 and His-58. Residues 58–60 (HYR) and Asn-90 contribute to the substrate site. Residues Asp-148, His-175, and His-228 each contribute to the Zn(2+) site. Asn-274 contributes to the substrate binding site. Asp-301 contributes to the Zn(2+) binding site. Asp-301 is a catalytic residue. Substrate is bound by residues His-305 and 319–320 (FG).

It belongs to the metallo-dependent hydrolases superfamily. DHOase family. Class I DHOase subfamily. Requires Zn(2+) as cofactor.

The catalysed reaction is (S)-dihydroorotate + H2O = N-carbamoyl-L-aspartate + H(+). The protein operates within pyrimidine metabolism; UMP biosynthesis via de novo pathway; (S)-dihydroorotate from bicarbonate: step 3/3. Catalyzes the reversible cyclization of carbamoyl aspartate to dihydroorotate. This is Dihydroorotase from Lactobacillus gasseri (strain ATCC 33323 / DSM 20243 / BCRC 14619 / CIP 102991 / JCM 1131 / KCTC 3163 / NCIMB 11718 / NCTC 13722 / AM63).